Here is a 650-residue protein sequence, read N- to C-terminus: Glycoprotein antigen BM86 (650 aa).

Positions 1 to 19 (MRGIALFVAAVSLIVEGTA) are cleaved as a signal peptide. EGF-like domains lie at 20 to 66 (ESSI…KQCE) and 67 to 104 (YKDTCKTRECSYGRCVESNPSKASCVCEASDDLTLQCK). Intrachain disulfides connect Cys-24-Cys-37, Cys-32-Cys-49, Cys-51-Cys-65, Cys-71-Cys-81, Cys-76-Cys-91, and Cys-93-Cys-103. N-linked (GlcNAc...) asparagine glycosylation is found at Asn-141 and Asn-182. EGF-like domains are found at residues 205–247 (CINA…ITCK), 251–292 (HTVS…DTCI), and 291–335 (CISD…NECL). 9 disulfides stabilise this stretch: Cys-209–Cys-222, Cys-218–Cys-231, Cys-233–Cys-246, Cys-255–Cys-269, Cys-263–Cys-278, Cys-280–Cys-291, Cys-295–Cys-307, Cys-300–Cys-316, and Cys-318–Cys-334. Asn-348 and Asn-382 each carry an N-linked (GlcNAc...) asparagine glycan. 2 EGF-like domains span residues 482–530 (RRSV…IGCI) and 531–568 (ERTTCNPKEIQECQDKKLECVYKNHKAECECPDDHECY). 6 disulfide bridges follow: Cys-486-Cys-500, Cys-492-Cys-516, Cys-518-Cys-529, Cys-535-Cys-550, Cys-543-Cys-559, and Cys-561-Cys-567. The interval 603-628 (KSEATTAATTTTKAKDKDPDPGKSSA) is disordered. The GPI-anchor amidated serine moiety is linked to residue Ser-627. Positions 628–650 (AAAVSATGLLLLLAATSVTAASL) are cleaved as a propeptide — removed in mature form.

It is found in the cell membrane. The protein is Glycoprotein antigen BM86 of Rhipicephalus microplus (Cattle tick).